The chain runs to 325 residues: Putative [LysW]-lysine/[LysW]-ornithine hydrolase (325 aa).

Zn(2+) is bound at residue H66. The active site involves D68. D90 serves as a coordination point for Zn(2+). The active-site Proton acceptor is E117. Residues E118, E139, and H297 each coordinate Zn(2+).

This sequence belongs to the peptidase M20A family. LysK subfamily. It depends on Zn(2+) as a cofactor. Co(2+) is required as a cofactor.

It is found in the cytoplasm. The catalysed reaction is [amino-group carrier protein]-C-terminal-gamma-(L-lysyl)-L-glutamate + H2O = [amino-group carrier protein]-C-terminal-L-glutamate + L-lysine. It carries out the reaction [amino-group carrier protein]-C-terminal-gamma-(L-ornithyl)-L-glutamate + H2O = [amino-group carrier protein]-C-terminal-L-glutamate + L-ornithine. It functions in the pathway amino-acid biosynthesis; L-lysine biosynthesis via AAA pathway; L-lysine from L-alpha-aminoadipate (Thermus route): step 5/5. It participates in amino-acid biosynthesis; L-arginine biosynthesis. Functionally, catalyzes the release of L-lysine from [LysW]-gamma-L-lysine and the release of L-ornithine from [LysW]-L-ornithine. This chain is Putative [LysW]-lysine/[LysW]-ornithine hydrolase, found in Pyrococcus horikoshii (strain ATCC 700860 / DSM 12428 / JCM 9974 / NBRC 100139 / OT-3).